Here is a 1548-residue protein sequence, read N- to C-terminus: Zinc finger MYM-type protein 4 (1548 aa).

N-acetylalanine is present on A2. T107 is modified (phosphothreonine). Phosphoserine occurs at positions 110 and 122. Glycyl lysine isopeptide (Lys-Gly) (interchain with G-Cter in SUMO2) cross-links involve residues K140 and K149. Residue S162 is modified to Phosphoserine. Residues 162 to 189 form a disordered region; sequence SKETFSGKEKNRDLTYEREKRLDKPHKD. K195 participates in a covalent cross-link: Glycyl lysine isopeptide (Lys-Gly) (interchain with G-Cter in SUMO2). S197 carries the post-translational modification Phosphoserine. Residues K201 and K232 each participate in a glycyl lysine isopeptide (Lys-Gly) (interchain with G-Cter in SUMO2) cross-link. The residue at position 242 (S242) is a Phosphoserine. K250 participates in a covalent cross-link: Glycyl lysine isopeptide (Lys-Gly) (interchain with G-Cter in SUMO1); alternate. K250 participates in a covalent cross-link: Glycyl lysine isopeptide (Lys-Gly) (interchain with G-Cter in SUMO2); alternate. Residues K260, K271, K273, K289, K327, K400, K428, and K430 each participate in a glycyl lysine isopeptide (Lys-Gly) (interchain with G-Cter in SUMO2) cross-link. 9 MYM-type zinc fingers span residues 362–402, 414–457, 464–499, 510–544, 554–592, 600–631, 708–742, 749–788, and 795–829; these read QLFC…PKDV, KDFC…RHEV, HKLC…GSGQ, KKFC…AEMI, ELFC…QYHL, RNFC…LSQG, FQFC…KETV, KSFC…LVQN, and EEFC…SESL. A Phosphoserine modification is found at S1030. Glycyl lysine isopeptide (Lys-Gly) (interchain with G-Cter in SUMO2) cross-links involve residues K1035 and K1061. S1064 and S1071 each carry phosphoserine. Residues K1080 and K1127 each participate in a glycyl lysine isopeptide (Lys-Gly) (interchain with G-Cter in SUMO2) cross-link. Residues 1124–1134 show a composition bias toward basic and acidic residues; sequence SELKQFSKGET. 2 disordered regions span residues 1124 to 1183 and 1231 to 1260; these read SELK…KSIV and KCGG…QESS. Residues 1160–1181 show a composition bias toward basic residues; sequence SRTRRRHRDGFPQPRRRGRKKS. Phosphoserine occurs at positions 1181 and 1256. Over residues 1237-1260 the composition is skewed to polar residues; it reads QASSSPRSDPLGSTQDHALSQESS. K1431 participates in a covalent cross-link: Glycyl lysine isopeptide (Lys-Gly) (interchain with G-Cter in SUMO2). S1539, S1542, and S1547 each carry phosphoserine.

In terms of tissue distribution, expressed at higher level in heart, skeletal muscle, kidney and liver.

In terms of biological role, plays a role in the regulation of cell morphology and cytoskeletal organization. The polypeptide is Zinc finger MYM-type protein 4 (ZMYM4) (Homo sapiens (Human)).